The primary structure comprises 370 residues: Biotin synthase (370 aa).

Residues 56 to 283 (NAVQVSTLLS…KSHVRLSAGR (228 aa)) form the Radical SAM core domain. Positions 71, 75, and 78 each coordinate [4Fe-4S] cluster. 4 residues coordinate [2Fe-2S] cluster: C115, C146, C206, and R278. Residues 327 to 344 (GLHPEPSDPHADDAHRDD) show a composition bias toward basic and acidic residues. Residues 327-346 (GLHPEPSDPHADDAHRDDEQ) are disordered.

Belongs to the radical SAM superfamily. Biotin synthase family. Homodimer. It depends on [4Fe-4S] cluster as a cofactor. [2Fe-2S] cluster is required as a cofactor.

The catalysed reaction is (4R,5S)-dethiobiotin + (sulfur carrier)-SH + 2 reduced [2Fe-2S]-[ferredoxin] + 2 S-adenosyl-L-methionine = (sulfur carrier)-H + biotin + 2 5'-deoxyadenosine + 2 L-methionine + 2 oxidized [2Fe-2S]-[ferredoxin]. The protein operates within cofactor biosynthesis; biotin biosynthesis; biotin from 7,8-diaminononanoate: step 2/2. Its function is as follows. Catalyzes the conversion of dethiobiotin (DTB) to biotin by the insertion of a sulfur atom into dethiobiotin via a radical-based mechanism. In Chromohalobacter salexigens (strain ATCC BAA-138 / DSM 3043 / CIP 106854 / NCIMB 13768 / 1H11), this protein is Biotin synthase.